We begin with the raw amino-acid sequence, 835 residues long: Leucine--tRNA ligase (835 aa).

A 'HIGH' region motif is present at residues 36–46; that stretch reads PYPSGKIHVGH. Positions 602-606 match the 'KMSKS' region motif; sequence KMSKS. Lys-605 provides a ligand contact to ATP.

Belongs to the class-I aminoacyl-tRNA synthetase family.

It is found in the cytoplasm. It catalyses the reaction tRNA(Leu) + L-leucine + ATP = L-leucyl-tRNA(Leu) + AMP + diphosphate. In Rickettsia rickettsii (strain Iowa), this protein is Leucine--tRNA ligase.